Reading from the N-terminus, the 241-residue chain is uncharacterized protein (241 aa).

The region spanning 147 to 212 is the HTH luxR-type domain; it reads FSYRSVILTL…EMYAWINSAQ (66 aa).

This is an uncharacterized protein from Escherichia coli O157:H7.